A 478-amino-acid polypeptide reads, in one-letter code: Glycogen synthase (478 aa).

Residue lysine 20 coordinates ADP-alpha-D-glucose.

The protein belongs to the glycosyltransferase 1 family. Bacterial/plant glycogen synthase subfamily.

It catalyses the reaction [(1-&gt;4)-alpha-D-glucosyl](n) + ADP-alpha-D-glucose = [(1-&gt;4)-alpha-D-glucosyl](n+1) + ADP + H(+). It functions in the pathway glycan biosynthesis; glycogen biosynthesis. Functionally, synthesizes alpha-1,4-glucan chains using ADP-glucose. This Cereibacter sphaeroides (strain ATCC 17023 / DSM 158 / JCM 6121 / CCUG 31486 / LMG 2827 / NBRC 12203 / NCIMB 8253 / ATH 2.4.1.) (Rhodobacter sphaeroides) protein is Glycogen synthase.